We begin with the raw amino-acid sequence, 166 residues long: CDP-archaeol synthase (166 aa).

5 consecutive transmembrane segments (helical) span residues 1–21 (MPII…LVAN), 55–75 (LLVA…FLGI), 78–98 (IYVS…GAFI), 110–130 (AIGL…IISK), and 131–151 (ISLN…LHIL).

Belongs to the CDP-archaeol synthase family. Mg(2+) serves as cofactor.

The protein localises to the cell membrane. It catalyses the reaction 2,3-bis-O-(geranylgeranyl)-sn-glycerol 1-phosphate + CTP + H(+) = CDP-2,3-bis-O-(geranylgeranyl)-sn-glycerol + diphosphate. Its pathway is membrane lipid metabolism; glycerophospholipid metabolism. Catalyzes the formation of CDP-2,3-bis-(O-geranylgeranyl)-sn-glycerol (CDP-archaeol) from 2,3-bis-(O-geranylgeranyl)-sn-glycerol 1-phosphate (DGGGP) and CTP. This reaction is the third ether-bond-formation step in the biosynthesis of archaeal membrane lipids. The chain is CDP-archaeol synthase from Sulfurisphaera tokodaii (strain DSM 16993 / JCM 10545 / NBRC 100140 / 7) (Sulfolobus tokodaii).